We begin with the raw amino-acid sequence, 2022 residues long: Transient receptor potential cation channel subfamily M member 6 (2022 aa).

Topologically, residues 1–741 (MKEQPVLERL…MWMGRLKMRK (741 aa)) are cytoplasmic. The helical transmembrane segment at 742-762 (NSWLKIIISIILPPTILTLEF) threads the bilayer. Topologically, residues 763-841 (KSKAEMSHVP…YEFYSAPIVK (79 aa)) are extracellular. A helical transmembrane segment spans residues 842–862 (FWFYTMAYLAFLMLFTYTVLV). Residues 863–905 (EMQPQPSVQEWLVSIYIFTNAIEVVREICISEPGKFTQKVKVW) are Cytoplasmic-facing. Residues 906–926 (ISEYWNLTETVAIGLFSAGFV) traverse the membrane as a helical segment. The Extracellular segment spans residues 927–939 (LRWGDPPFHTAGR). A helical transmembrane segment spans residues 940–960 (LIYCIDIIFWFSRLLDFFAVN). Topologically, residues 961–972 (QHAGPYVTMIAK) are cytoplasmic. Residues 973–993 (MTANMFYIVIIMAIVLLSFGV) traverse the membrane as a helical segment. At 994–1012 (ARKAILSPKEPPSWSLARD) the chain is on the extracellular side. The pore-forming intramembrane region spans 1013 to 1033 (IVFEPYWMIYGEVYAGEIDVC). Residues 1034–1047 (SSQPSCPPGSFLTP) are Extracellular-facing. The chain crosses the membrane as a helical span at residues 1048–1068 (FLQAVYLFVQYIIMVNLLIAF). The Cytoplasmic segment spans residues 1069 to 2022 (FNNVYLDMES…RNSPEDDMQL (954 aa)). The tract at residues 1479 to 1516 (TCDSDSSRSEQHQKQAQDSSLSDNSTRSAQSSECSEVG) is disordered. Residues 1483–1493 (DSSRSEQHQKQ) show a composition bias toward basic and acidic residues. Residues 1494–1512 (AQDSSLSDNSTRSAQSSEC) are compositionally biased toward polar residues. Residues 1750–1980 (NLDKSMSSWS…CCRKLKLPDL (231 aa)) enclose the Alpha-type protein kinase domain. The ADP site is built by glycine 1777, glycine 1778, leucine 1779, arginine 1780, and lysine 1804. Threonine 1851 bears the Phosphothreonine; by autocatalysis mark. 2 residues coordinate ADP: glutamate 1876 and methionine 1879. A Zn(2+)-binding site is contributed by histidine 1909. Catalysis depends on aspartate 1923, which acts as the Proton acceptor. Residue aspartate 1933 participates in ADP binding. Positions 1966, 1968, and 1972 each coordinate Zn(2+). Positions 1997-2022 (EIKIESAEEPPARETGRNSPEDDMQL) are disordered. Residues 1998–2016 (IKIESAEEPPARETGRNSP) show a composition bias toward basic and acidic residues.

In the C-terminal section; belongs to the protein kinase superfamily. Alpha-type protein kinase family. ALPK subfamily. The protein in the N-terminal section; belongs to the transient receptor (TC 1.A.4) family. LTrpC subfamily. TRPM6 sub-subfamily. As to quaternary structure, homomers. Forms heteromers with TRPM7; TRPM6 increases the current amplitude of TRPM6/7 heteromers as compared to TRPM7 homomer. Interacts (via kinase domain) with RACK1. Autophosphorylated; autophosphorylation controlls the protein kinase activity of TRPM6 towards their substrates. Autophosphorylation of Thr-1851 in the kinase domain is essential for the inhibitory effect of RACK1. Post-translationally, the C-terminus of TRPM6 is proteolytically cleaved in vivo, in a cell type-specific fashion, releasing the kinase module from the transmembrane domain. The cleaved kinase fragments are translocated to the nucleus to phosphorylate histones and regulate gene expression. Highly expressed in kidney and colon. Isoform TRPM6a and isoform TRPM6b, are coexpressed with TRPM7 in kidney, and testis, and are also found in several cell lines of lung origin. Isoform TRPM6c is detected only in testis and in NCI-H510A small cell lung carcinoma cells.

It is found in the cell membrane. The protein localises to the apical cell membrane. Its subcellular location is the nucleus. It carries out the reaction L-seryl-[protein] + ATP = O-phospho-L-seryl-[protein] + ADP + H(+). The catalysed reaction is L-threonyl-[protein] + ATP = O-phospho-L-threonyl-[protein] + ADP + H(+). It catalyses the reaction Mg(2+)(in) = Mg(2+)(out). The enzyme catalyses Ca(2+)(in) = Ca(2+)(out). It carries out the reaction Zn(2+)(in) = Zn(2+)(out). With respect to regulation, strongly inhibited by intracellular Mg(2+); unlikely to be active at physiological levels of intracellular Mg(2+). In the heteromeric TRPM6-TRPM7 channels complexes, TRPM7 are able to offset the very high sensitivity of TRPM6 to cytosolic Mg(2+) to physiologically relevant concentrations, whereas TRPM6 relieve TRPM7 from the inhibitory action of Mg-ATP. Consequently, the association of TRPM6 with TRPM7 allow for high constitutive activity of TRPM6/7 in the presence of physiological levels of Mg(2+) and Mg-ATP. The kinase activity is controlled through the autophosphorylation of a serine/threonine-rich region located to the N-terminal of the catalytic domain. In terms of biological role, bifunctional protein that combines an ion channel with an intrinsic kinase domain, enabling it to modulate cellular functions either by conducting ions through the pore or by phosphorylating downstream proteins via its kinase domain. Crucial for Mg(2+) homeostasis. Has an important role in epithelial Mg(2+) transport and in the active Mg(2+) absorption in the gut and kidney. However, whether TRPM6 forms functional homomeric channels by itself or functions primarily as a subunit of heteromeric TRPM6-TRPM7 channels, is still under debate. The C-terminal kinase domain can be cleaved from the channel segment in a cell-type-specific fashion. The cleaved kinase fragments can translocate to the nucleus, and bind chromatin-remodeling complex proteins to ultimately phosphorylate specific Ser/Thr residues of histones known to be functionally important for cell differentiation and development. The polypeptide is Transient receptor potential cation channel subfamily M member 6 (TRPM6) (Homo sapiens (Human)).